The sequence spans 573 residues: Proline--tRNA ligase (573 aa).

It belongs to the class-II aminoacyl-tRNA synthetase family. ProS type 1 subfamily. As to quaternary structure, homodimer.

It localises to the cytoplasm. The enzyme catalyses tRNA(Pro) + L-proline + ATP = L-prolyl-tRNA(Pro) + AMP + diphosphate. In terms of biological role, catalyzes the attachment of proline to tRNA(Pro) in a two-step reaction: proline is first activated by ATP to form Pro-AMP and then transferred to the acceptor end of tRNA(Pro). As ProRS can inadvertently accommodate and process non-cognate amino acids such as alanine and cysteine, to avoid such errors it has two additional distinct editing activities against alanine. One activity is designated as 'pretransfer' editing and involves the tRNA(Pro)-independent hydrolysis of activated Ala-AMP. The other activity is designated 'posttransfer' editing and involves deacylation of mischarged Ala-tRNA(Pro). The misacylated Cys-tRNA(Pro) is not edited by ProRS. The polypeptide is Proline--tRNA ligase (Cupriavidus taiwanensis (strain DSM 17343 / BCRC 17206 / CCUG 44338 / CIP 107171 / LMG 19424 / R1) (Ralstonia taiwanensis (strain LMG 19424))).